A 426-amino-acid chain; its full sequence is MSGKQDLSPLGLYSSYDPTKGLISYTSLYGSGTTVTFEELQIFVNKKITQGILFGTRIGAAGLAIIVLWMVSKNRKTPIFIINQISLFLILLHSSLFLRYLLGDYASVVFNFTLFSQSISRNDVHVYGATNMIQVLLVAAVEISLIFQVRVIFKGDSYKGVGRILTSISAVLGFTTVVMYFITAVKSMTSVYSDLTKTSDRYFFNIASILLSSSVNFMTLLLTVKLILAVRSRRFLGLKQFDSFHVLLIMSFQTLIFPSILFILAYALNPNQGTDTLTSIATLLVTLSLPLSSMWATSANNSSHPSSINTQFRQRNYDDVSFKTGITSFYSESSKPSSKYRHTNNLYDLYPVSRTSNSRCNGYPNDGSKLAPNPNCVGHNGSTMSVNDKNGAHATCVQNNVTLNTDSTLNYSNVDTQDTSKILMTT.

7 helical membrane passes run 50-72, 79-101, 131-153, 160-182, 202-224, 245-267, and 277-299; these read QGIL…WMVS, IFII…LRYL, NMIQ…RVIF, GVGR…MYFI, YFFN…LLTV, HVLL…LAYA, and LTSI…ATSA.

Belongs to the G-protein coupled receptor 4 family.

The protein resides in the membrane. Functionally, receptor for the peptide pheromone alpha factor, the mating factor of yeast. This is Pheromone alpha factor receptor (STE2) from Lachancea kluyveri (Yeast).